We begin with the raw amino-acid sequence, 474 residues long: MAGKTLYGKLWDIHEVARRDDGSSLIYIDRHILHEVTSPQAFEGLRLAGRPLWRVNANIATPDHNVPTTKAERQGSLLSIADTVSRLQVQTLDENCDDFGIFEFKMNDVRQGIVHVIGPEQGATLPGMTVVCGDSHTSTHGAFGALAHGIGTSEVEHVLATQCLVTQKMKNMQVRVEGTLSWGVTAKDIVLALIGKIGTAGGNGYAVEFSGSTIRALSMEGRMTICNMAIEAGARVGMVAVDEKTIQYVHGRPFAPKGSDWDAAVAFWRGLVSDPDAHFDRVVELSAEEIKPQVTWGTSPEMVSAVDQSVPDPERETDPVKKESLIRALKYMGLQPNDPITSIKLDRVFIGSCTNSRIEDLRAAAEVVKGRKVASTVKQAMVVPGSGLVKAQAEVEGLDKIFIEAGFEWREPGCSMCLAMNPDKLGSGEHCASTSNRNFEGRQGIGGRTHLVSPAMAAAAAVAGHFVDVREMMR.

[4Fe-4S] cluster is bound by residues C353, C414, and C417.

The protein belongs to the aconitase/IPM isomerase family. LeuC type 1 subfamily. As to quaternary structure, heterodimer of LeuC and LeuD. [4Fe-4S] cluster serves as cofactor.

The catalysed reaction is (2R,3S)-3-isopropylmalate = (2S)-2-isopropylmalate. It participates in amino-acid biosynthesis; L-leucine biosynthesis; L-leucine from 3-methyl-2-oxobutanoate: step 2/4. In terms of biological role, catalyzes the isomerization between 2-isopropylmalate and 3-isopropylmalate, via the formation of 2-isopropylmaleate. This Xylella fastidiosa (strain M12) protein is 3-isopropylmalate dehydratase large subunit.